We begin with the raw amino-acid sequence, 160 residues long: Small ribosomal subunit protein bS6 (160 aa).

Belongs to the bacterial ribosomal protein bS6 family.

Functionally, binds together with bS18 to 16S ribosomal RNA. The sequence is that of Small ribosomal subunit protein bS6 from Ureaplasma urealyticum serovar 10 (strain ATCC 33699 / Western).